Consider the following 305-residue polypeptide: GTPase Era (305 aa).

An Era-type G domain is found at 13–181 (RCGYVAIVGR…EKLVAERLPE (169 aa)). Residues 21–28 (GRPNVGKS) are G1. 21–28 (GRPNVGKS) lines the GTP pocket. The tract at residues 47 to 51 (QTTRH) is G2. The segment at 68 to 71 (DTPG) is G3. Residues 68-72 (DTPGL) and 130-133 (NKTD) each bind GTP. Residues 130–133 (NKTD) are G4. Residues 160–162 (ISA) are G5. In terms of domain architecture, KH type-2 spans 204 to 288 (VREKIMRQLG…MLNLWVKVKG (85 aa)).

It belongs to the TRAFAC class TrmE-Era-EngA-EngB-Septin-like GTPase superfamily. Era GTPase family. Monomer.

It is found in the cytoplasm. It localises to the cell inner membrane. Functionally, an essential GTPase that binds both GDP and GTP, with rapid nucleotide exchange. Plays a role in 16S rRNA processing and 30S ribosomal subunit biogenesis and possibly also in cell cycle regulation and energy metabolism. This Pseudomonas aeruginosa (strain LESB58) protein is GTPase Era.